We begin with the raw amino-acid sequence, 444 residues long: Phosphoglucosamine mutase (444 aa).

S104 (phosphoserine intermediate) is an active-site residue. Residues S104, D243, D245, and D247 each coordinate Mg(2+). S104 is subject to Phosphoserine.

The protein belongs to the phosphohexose mutase family. Mg(2+) serves as cofactor. Post-translationally, activated by phosphorylation.

The enzyme catalyses alpha-D-glucosamine 1-phosphate = D-glucosamine 6-phosphate. Its function is as follows. Catalyzes the conversion of glucosamine-6-phosphate to glucosamine-1-phosphate. This Neisseria meningitidis serogroup C (strain 053442) protein is Phosphoglucosamine mutase.